A 201-amino-acid chain; its full sequence is Holliday junction resolvase RecU (201 aa).

Mg(2+) contacts are provided by Thr87, Asp89, Glu102, and Gln121.

It belongs to the RecU family. It depends on Mg(2+) as a cofactor.

Its subcellular location is the cytoplasm. It catalyses the reaction Endonucleolytic cleavage at a junction such as a reciprocal single-stranded crossover between two homologous DNA duplexes (Holliday junction).. In terms of biological role, endonuclease that resolves Holliday junction intermediates in genetic recombination. Cleaves mobile four-strand junctions by introducing symmetrical nicks in paired strands. Promotes annealing of linear ssDNA with homologous dsDNA. Required for DNA repair, homologous recombination and chromosome segregation. This chain is Holliday junction resolvase RecU, found in Listeria monocytogenes serotype 4b (strain F2365).